The primary structure comprises 197 residues: Xanthine phosphoribosyltransferase (197 aa).

Positions 20 and 27 each coordinate xanthine. 128–132 (ANGQA) contacts 5-phospho-alpha-D-ribose 1-diphosphate. Lys156 is a xanthine binding site.

Belongs to the purine/pyrimidine phosphoribosyltransferase family. Xpt subfamily. As to quaternary structure, homodimer.

It is found in the cytoplasm. It carries out the reaction XMP + diphosphate = xanthine + 5-phospho-alpha-D-ribose 1-diphosphate. The protein operates within purine metabolism; XMP biosynthesis via salvage pathway; XMP from xanthine: step 1/1. In terms of biological role, converts the preformed base xanthine, a product of nucleic acid breakdown, to xanthosine 5'-monophosphate (XMP), so it can be reused for RNA or DNA synthesis. The protein is Xanthine phosphoribosyltransferase of Bacillus thuringiensis (strain Al Hakam).